Here is a 757-residue protein sequence, read N- to C-terminus: 5-methyltetrahydropteroyltriglutamate--homocysteine methyltransferase (757 aa).

5-methyltetrahydropteroyltri-L-glutamate is bound by residues 16–19 (RELK) and Lys-112. L-homocysteine contacts are provided by residues 432–434 (IGS) and Glu-485. Residues 432-434 (IGS) and Glu-485 contribute to the L-methionine site. Residues 516-517 (RC) and Trp-562 contribute to the 5-methyltetrahydropteroyltri-L-glutamate site. Asp-600 is a binding site for L-homocysteine. L-methionine is bound at residue Asp-600. 5-methyltetrahydropteroyltri-L-glutamate is bound at residue Glu-606. Positions 642, 644, and 666 each coordinate Zn(2+). Residue His-695 is the Proton donor of the active site. Cys-727 contacts Zn(2+).

Belongs to the vitamin-B12 independent methionine synthase family. It depends on Zn(2+) as a cofactor.

It catalyses the reaction 5-methyltetrahydropteroyltri-L-glutamate + L-homocysteine = tetrahydropteroyltri-L-glutamate + L-methionine. Its pathway is amino-acid biosynthesis; L-methionine biosynthesis via de novo pathway; L-methionine from L-homocysteine (MetE route): step 1/1. In terms of biological role, catalyzes the transfer of a methyl group from 5-methyltetrahydrofolate to homocysteine resulting in methionine formation. The chain is 5-methyltetrahydropteroyltriglutamate--homocysteine methyltransferase from Actinobacillus pleuropneumoniae serotype 5b (strain L20).